The sequence spans 499 residues: Glycerol kinase (499 aa).

Position 14 (threonine 14) interacts with ADP. ATP-binding residues include threonine 14, threonine 15, and serine 16. A sn-glycerol 3-phosphate-binding site is contributed by threonine 14. Position 18 (arginine 18) interacts with ADP. Sn-glycerol 3-phosphate is bound by residues arginine 84, glutamate 85, tyrosine 136, and aspartate 245. Glycerol contacts are provided by arginine 84, glutamate 85, tyrosine 136, aspartate 245, and glutamine 246. ADP-binding residues include threonine 267 and glycine 310. Threonine 267, glycine 310, glutamine 314, and glycine 411 together coordinate ATP. Positions 411 and 415 each coordinate ADP.

This sequence belongs to the FGGY kinase family.

It catalyses the reaction glycerol + ATP = sn-glycerol 3-phosphate + ADP + H(+). It participates in polyol metabolism; glycerol degradation via glycerol kinase pathway; sn-glycerol 3-phosphate from glycerol: step 1/1. Inhibited by fructose 1,6-bisphosphate (FBP). Functionally, key enzyme in the regulation of glycerol uptake and metabolism. Catalyzes the phosphorylation of glycerol to yield sn-glycerol 3-phosphate. This chain is Glycerol kinase, found in Nitrosomonas eutropha (strain DSM 101675 / C91 / Nm57).